The sequence spans 394 residues: Probable acetyl-CoA acyltransferase (394 aa).

The active-site Acyl-thioester intermediate is the cysteine 88. Catalysis depends on proton acceptor residues histidine 349 and cysteine 378.

It belongs to the thiolase-like superfamily. Thiolase family.

It localises to the cytoplasm. It carries out the reaction 2 acetyl-CoA = acetoacetyl-CoA + CoA. The protein is Probable acetyl-CoA acyltransferase of Staphylococcus epidermidis (strain ATCC 35984 / DSM 28319 / BCRC 17069 / CCUG 31568 / BM 3577 / RP62A).